Consider the following 236-residue polypeptide: Small ribosomal subunit protein uS5 (236 aa).

Residues 61-124 (ENQEIIDIAL…NYAKLNIIEI (64 aa)) enclose the S5 DRBM domain.

It belongs to the universal ribosomal protein uS5 family. Part of the 30S ribosomal subunit. Contacts protein S4.

Functionally, with S4 and S12 plays an important role in translational accuracy. The chain is Small ribosomal subunit protein uS5 from Pyrococcus horikoshii (strain ATCC 700860 / DSM 12428 / JCM 9974 / NBRC 100139 / OT-3).